Reading from the N-terminus, the 486-residue chain is MAGPMCLCGMMRLLTALFIPVLITSVGLCLIFVLLFICTRLWVQRKKKVEIGKDGKKKKVVAFFHPYCNAGGGGERVLWCALRSLQKRYKDAIYVIYTGDKDASEEQILNGAAARFNIKLSHPVRFIFLEKRGLVEASCYPRFTLLGQSLGSVVLGWEALTKCVPDIYIDSMGYAFTLPLFKYLGGCHVGCYVHYPTISMDMLSVVRSQHARFNNAAFISNNPVLSRLKLIYYYLFALFYGWVGSCSDVIMVNSTWTFSHILDLWKCSDRTSIVYPPCDVQTFLEIDINQHKENEEHSVVSIGQFRPEKDHPLQIRAFAALLEKKTAEQRAKLKLILIGGCRNDEDELRVSELKKLSSELGIPVEFKVNVPFEELKKHLSEATIGLHTMWNEHFGIGIVECMAAGTIILAHNSGGPKLDIVVPHEEQQTGFLADSVDSYAAAMDHILSLTPEQRLSIRQNARLSVGRFSDQEFEANFLASSEPLFK.

At 1–16 (MAGPMCLCGMMRLLTA) the chain is on the lumenal side. A helical transmembrane segment spans residues 17–37 (LFIPVLITSVGLCLIFVLLFI). At 38–229 (CTRLWVQRKK…SNNPVLSRLK (192 aa)) the chain is on the cytoplasmic side. The segment at residues 230–250 (LIYYYLFALFYGWVGSCSDVI) is an intramembrane region (helical). The Cytoplasmic segment spans residues 251–393 (MVNSTWTFSH…IGLHTMWNEH (143 aa)). The segment at residues 394–414 (FGIGIVECMAAGTIILAHNSG) is an intramembrane region (helical). Residues 415–486 (GPKLDIVVPH…FLASSEPLFK (72 aa)) lie on the Cytoplasmic side of the membrane.

Belongs to the glycosyltransferase group 1 family. Glycosyltransferase 4 subfamily.

The protein resides in the endoplasmic reticulum membrane. The enzyme catalyses an alpha-D-Man-(1-&gt;3)-[alpha-D-Man-(1-&gt;6)]-beta-D-Man-(1-&gt;4)-beta-D-GlcNAc-(1-&gt;4)-alpha-D-GlcNAc-diphospho-di-trans,poly-cis-dolichol + 2 GDP-alpha-D-mannose = an alpha-D-Man-(1-&gt;2)-alpha-D-Man-(1-&gt;2)-alpha-D-Man-(1-&gt;3)-[alpha-D-Man-(1-&gt;6)]-beta-D-Man-(1-&gt;4)-beta-D-GlcNAc-(1-&gt;4)-alpha-D-GlcNAc-diphospho-di-trans,poly-cis-dolichol + 2 GDP + 2 H(+). It functions in the pathway protein modification; protein glycosylation. Its function is as follows. GDP-Man:Man(3)GlcNAc(2)-PP-Dol alpha-1,2-mannosyltransferase that operates in the biosynthetic pathway of dolichol-linked oligosaccharides, the glycan precursors employed in protein asparagine (N)-glycosylation. The assembly of dolichol-linked oligosaccharides begins on the cytosolic side of the endoplasmic reticulum membrane and finishes in its lumen. The sequential addition of sugars to dolichol pyrophosphate produces dolichol-linked oligosaccharides containing fourteen sugars, including two GlcNAcs, nine mannoses and three glucoses. Once assembled, the oligosaccharide is transferred from the lipid to nascent proteins by oligosaccharyltransferases. Catalyzes, on the cytoplasmic face of the endoplasmic reticulum, the addition of the fourth and fifth mannose residues to the dolichol-linked oligosaccharide chain, to produce Man(5)GlcNAc(2)-PP-dolichol core oligosaccharide. Man(5)GlcNAc(2)-PP-dolichol is a substrate for ALG3, the following enzyme in the biosynthetic pathway. In Xenopus laevis (African clawed frog), this protein is GDP-Man:Man(3)GlcNAc(2)-PP-Dol alpha-1,2-mannosyltransferase (alg11).